The chain runs to 425 residues: 5-methylthioadenosine/S-adenosylhomocysteine deaminase (425 aa).

Zn(2+)-binding residues include histidine 63 and histidine 65. Substrate-binding residues include glutamate 92 and histidine 184. Histidine 211 lines the Zn(2+) pocket. Glutamate 214 and aspartate 299 together coordinate substrate. Aspartate 299 is a binding site for Zn(2+).

The protein belongs to the metallo-dependent hydrolases superfamily. MTA/SAH deaminase family. Zn(2+) serves as cofactor.

It carries out the reaction S-adenosyl-L-homocysteine + H2O + H(+) = S-inosyl-L-homocysteine + NH4(+). The enzyme catalyses S-methyl-5'-thioadenosine + H2O + H(+) = S-methyl-5'-thioinosine + NH4(+). Catalyzes the deamination of 5-methylthioadenosine and S-adenosyl-L-homocysteine into 5-methylthioinosine and S-inosyl-L-homocysteine, respectively. Is also able to deaminate adenosine. This Pyrococcus abyssi (strain GE5 / Orsay) protein is 5-methylthioadenosine/S-adenosylhomocysteine deaminase.